The chain runs to 536 residues: ATP synthase subunit beta (536 aa).

A disordered region spans residues 1–57; the sequence is MVKAVSSSKGAAKVEQKKSAARSGVKKNASKSQASLQDTSSPLKTSSKNAHAKKDVQ. Residues 30–49 show a composition bias toward polar residues; sequence SKSQASLQDTSSPLKTSSKN. An ATP-binding site is contributed by 208–215; that stretch reads GGAGVGKT.

The protein belongs to the ATPase alpha/beta chains family. In terms of assembly, F-type ATPases have 2 components, CF(1) - the catalytic core - and CF(0) - the membrane proton channel. CF(1) has five subunits: alpha(3), beta(3), gamma(1), delta(1), epsilon(1). CF(0) has three main subunits: a(1), b(2) and c(9-12). The alpha and beta chains form an alternating ring which encloses part of the gamma chain. CF(1) is attached to CF(0) by a central stalk formed by the gamma and epsilon chains, while a peripheral stalk is formed by the delta and b chains.

The protein localises to the cell inner membrane. The catalysed reaction is ATP + H2O + 4 H(+)(in) = ADP + phosphate + 5 H(+)(out). Produces ATP from ADP in the presence of a proton gradient across the membrane. The catalytic sites are hosted primarily by the beta subunits. This Bartonella quintana (strain Toulouse) (Rochalimaea quintana) protein is ATP synthase subunit beta.